We begin with the raw amino-acid sequence, 264 residues long: Major prion protein (264 aa).

An N-terminal signal peptide occupies residues 1–24 (MVKSHIGSWILVLFVAMWSDVGLC). Positions 25-241 (KKRPKPGGGW…ESEAYYQRGA (217 aa)) are interaction with GRB2, ERI3 and SYN1. The disordered stretch occupies residues 28-118 (PKPGGGWNTG…QWNKPSKPKT (91 aa)). 6 tandem repeats follow at residues 54-62 (SQGGGGWGQ), 63-70 (PHGGGWGQ), 71-78 (PHGGGWGQ), 79-86 (PHGGGWGQ), 87-94 (PHGGGWGQ), and 95-103 (PHGGGGWGQ). The segment at 54–103 (SQGGGGWGQPHGGGWGQPHGGGWGQPHGGGWGQPHGGGWGQPHGGGGWGQ) is 6 X 8 AA tandem repeats of P-H-G-G-G-W-G-Q. A compositionally biased stretch (gly residues) spans 55 to 107 (QGGGGWGQPHGGGWGQPHGGGWGQPHGGGWGQPHGGGWGQPHGGGGWGQGGTH). Residues histidine 72, glycine 73, glycine 74, histidine 80, glycine 81, glycine 82, histidine 88, glycine 89, glycine 90, histidine 96, glycine 98, and glycine 99 each coordinate Cu(2+). Residues cysteine 190 and cysteine 225 are joined by a disulfide bond. N-linked (GlcNAc...) asparagine glycosylation is found at asparagine 192 and asparagine 208. Alanine 241 carries the GPI-anchor amidated alanine lipid modification. Positions 242 to 264 (SVILFSSPPVILLISFLIFLIVG) are cleaved as a propeptide — removed in mature form.

Belongs to the prion family. In terms of assembly, monomer and homodimer. Has a tendency to aggregate into amyloid fibrils containing a cross-beta spine, formed by a steric zipper of superposed beta-strands. Soluble oligomers may represent an intermediate stage on the path to fibril formation. Copper binding may promote oligomerization. Interacts with GRB2, APP, ERI3/PRNPIP and SYN1. Mislocalized cytosolically exposed PrP interacts with MGRN1; this interaction alters MGRN1 subcellular location and causes lysosomal enlargement. Interacts with KIAA1191.

The protein resides in the cell membrane. Its subcellular location is the golgi apparatus. Functionally, its primary physiological function is unclear. Has cytoprotective activity against internal or environmental stresses. May play a role in neuronal development and synaptic plasticity. May be required for neuronal myelin sheath maintenance. May play a role in iron uptake and iron homeostasis. Soluble oligomers are toxic to cultured neuroblastoma cells and induce apoptosis (in vitro). Association with GPC1 (via its heparan sulfate chains) targets PRNP to lipid rafts. Also provides Cu(2+) or Zn(2+) for the ascorbate-mediated GPC1 deaminase degradation of its heparan sulfate side chains. The protein is Major prion protein (PRNP) of Tragelaphus imberbis (Lesser kudu).